A 318-amino-acid chain; its full sequence is Small ribosomal subunit biogenesis GTPase RsgA (318 aa).

Residues 82–246 enclose the CP-type G domain; it reads RQDEIRTKSF…LIDSPGFQEF (165 aa). Residues 132 to 135 and 186 to 194 contribute to the GTP site; these read NKSD and GPSGAGKST. The Zn(2+) site is built by Cys-270, Cys-275, His-277, and Cys-283.

The protein belongs to the TRAFAC class YlqF/YawG GTPase family. RsgA subfamily. As to quaternary structure, monomer. Associates with 30S ribosomal subunit, binds 16S rRNA. Requires Zn(2+) as cofactor.

The protein resides in the cytoplasm. One of several proteins that assist in the late maturation steps of the functional core of the 30S ribosomal subunit. Helps release RbfA from mature subunits. May play a role in the assembly of ribosomal proteins into the subunit. Circularly permuted GTPase that catalyzes slow GTP hydrolysis, GTPase activity is stimulated by the 30S ribosomal subunit. In Variovorax paradoxus (strain S110), this protein is Small ribosomal subunit biogenesis GTPase RsgA.